Reading from the N-terminus, the 254-residue chain is Probable transcriptional regulatory protein HDEF_0869 (254 aa).

The interval 1 to 20 (MAGHSKWANTKHRKAAQDAK) is disordered.

This sequence belongs to the TACO1 family.

It localises to the cytoplasm. The sequence is that of Probable transcriptional regulatory protein HDEF_0869 from Hamiltonella defensa subsp. Acyrthosiphon pisum (strain 5AT).